We begin with the raw amino-acid sequence, 312 residues long: Serine/threonine-protein kinase ppk11 (312 aa).

Positions 6 to 258 (YRDLQLIGQG…AEYLSKHKFI (253 aa)) constitute a Protein kinase domain. ATP-binding positions include 12–20 (IGQGSFGSV) and K35. D127 functions as the Proton acceptor in the catalytic mechanism.

It belongs to the protein kinase superfamily. Ser/Thr protein kinase family.

The protein resides in the cytoplasm. It is found in the nucleus. It catalyses the reaction L-seryl-[protein] + ATP = O-phospho-L-seryl-[protein] + ADP + H(+). The enzyme catalyses L-threonyl-[protein] + ATP = O-phospho-L-threonyl-[protein] + ADP + H(+). The polypeptide is Serine/threonine-protein kinase ppk11 (ppk11) (Schizosaccharomyces pombe (strain 972 / ATCC 24843) (Fission yeast)).